The sequence spans 110 residues: Large ribosomal subunit protein uL22 (110 aa).

The protein belongs to the universal ribosomal protein uL22 family. As to quaternary structure, part of the 50S ribosomal subunit.

Its function is as follows. This protein binds specifically to 23S rRNA; its binding is stimulated by other ribosomal proteins, e.g. L4, L17, and L20. It is important during the early stages of 50S assembly. It makes multiple contacts with different domains of the 23S rRNA in the assembled 50S subunit and ribosome. The globular domain of the protein is located near the polypeptide exit tunnel on the outside of the subunit, while an extended beta-hairpin is found that lines the wall of the exit tunnel in the center of the 70S ribosome. This chain is Large ribosomal subunit protein uL22, found in Halorhodospira halophila (strain DSM 244 / SL1) (Ectothiorhodospira halophila (strain DSM 244 / SL1)).